A 171-amino-acid polypeptide reads, in one-letter code: MLDLSYSLERVLQEDPAARNKWEVLLLYPGIHALLCYRLAHALHKRRFYFIARALSQLARFITGIEIHPGAKIGRGLFIDHGMGVVIGETTEIGDDVTIYHGVTLGGTGKFKGKRHPTLGNRVVVGAGAKVLGAICVGDDVKIGANAVVLSDLPTGSTAVGSKAKTITKDR.

This sequence belongs to the transferase hexapeptide repeat family.

It localises to the cytoplasm. The catalysed reaction is L-serine + acetyl-CoA = O-acetyl-L-serine + CoA. Its pathway is amino-acid biosynthesis; L-cysteine biosynthesis; L-cysteine from L-serine: step 1/2. The polypeptide is Serine acetyltransferase (cysE) (Helicobacter pylori (strain ATCC 700392 / 26695) (Campylobacter pylori)).